The sequence spans 129 residues: uncharacterized protein (129 aa).

The disordered stretch occupies residues N52–Q94. Residues G53–L62 show a composition bias toward acidic residues. Polar residues predominate over residues M84 to Q94.

This is an uncharacterized protein from Caenorhabditis elegans.